The following is a 699-amino-acid chain: Elongation factor G (699 aa).

The 281-residue stretch at 8–288 folds into the tr-type G domain; that stretch reads EDYRNFGIMA…AVVDYLPSPM (281 aa). GTP-binding positions include 17–24, 86–90, and 140–143; these read AHIDAGKT, DTPGH, and NKMD.

It belongs to the TRAFAC class translation factor GTPase superfamily. Classic translation factor GTPase family. EF-G/EF-2 subfamily.

The protein resides in the cytoplasm. Catalyzes the GTP-dependent ribosomal translocation step during translation elongation. During this step, the ribosome changes from the pre-translocational (PRE) to the post-translocational (POST) state as the newly formed A-site-bound peptidyl-tRNA and P-site-bound deacylated tRNA move to the P and E sites, respectively. Catalyzes the coordinated movement of the two tRNA molecules, the mRNA and conformational changes in the ribosome. In Rhizobium leguminosarum bv. trifolii (strain WSM2304), this protein is Elongation factor G.